The following is a 458-amino-acid chain: Glycine--tRNA ligase (458 aa).

2 residues coordinate substrate: Arg-97 and Glu-171. ATP contacts are provided by residues 203–205 (RNE), 213–218 (FRTREF), 287–288 (EL), and 331–334 (GADR). 218 to 222 (FEQME) provides a ligand contact to substrate. Residue 327–331 (EPSLG) participates in substrate binding.

It belongs to the class-II aminoacyl-tRNA synthetase family. In terms of assembly, homodimer.

It localises to the cytoplasm. It carries out the reaction tRNA(Gly) + glycine + ATP = glycyl-tRNA(Gly) + AMP + diphosphate. Functionally, catalyzes the attachment of glycine to tRNA(Gly). The sequence is that of Glycine--tRNA ligase from Bacillus anthracis.